We begin with the raw amino-acid sequence, 334 residues long: Sucrose operon repressor (334 aa).

Positions 6–63 constitute an HTH lacI-type domain; it reads VTIKDIAELAGVSKATASLVLNGRGKELRVAQETRERVLAIAREQHYQPSIHARSLRD. Positions 8-27 form a DNA-binding region, H-T-H motif; it reads IKDIAELAGVSKATASLVLN.

In terms of biological role, repressor for the scr operon. Binds D-fructose as an inducer. This chain is Sucrose operon repressor (scrR), found in Klebsiella pneumoniae.